A 318-amino-acid polypeptide reads, in one-letter code: NADH-ubiquinone oxidoreductase chain 1 (318 aa).

The next 8 helical transmembrane spans lie at 3–23, 70–90, 100–120, 146–166, 171–191, 222–242, 254–273, and 294–314; these read LITLLSTIVPILLAVAFLTLV, MFIIAPILALALALTMWTPLP, LGILFMLAMSSLAVYAILWSG, LAIILLSILLMSGSYSLTTLI, YIWLILPSWPLTMMWFISTLA, LFFLAEYANIIMMNALTTILF, LYTTNFATKTLLLTMSFLWI, and LPLTLALCMWYVTMPIMLASI.

The protein belongs to the complex I subunit 1 family.

It localises to the mitochondrion inner membrane. It catalyses the reaction a ubiquinone + NADH + 5 H(+)(in) = a ubiquinol + NAD(+) + 4 H(+)(out). Functionally, core subunit of the mitochondrial membrane respiratory chain NADH dehydrogenase (Complex I) that is believed to belong to the minimal assembly required for catalysis. Complex I functions in the transfer of electrons from NADH to the respiratory chain. The immediate electron acceptor for the enzyme is believed to be ubiquinone. This chain is NADH-ubiquinone oxidoreductase chain 1 (MT-ND1), found in Phyllostomus elongatus (Lesser spear-nosed bat).